We begin with the raw amino-acid sequence, 460 residues long: Argininosuccinate lyase (460 aa).

Belongs to the lyase 1 family. Argininosuccinate lyase subfamily.

It localises to the cytoplasm. The enzyme catalyses 2-(N(omega)-L-arginino)succinate = fumarate + L-arginine. The protein operates within amino-acid biosynthesis; L-arginine biosynthesis; L-arginine from L-ornithine and carbamoyl phosphate: step 3/3. This is Argininosuccinate lyase from Lawsonia intracellularis (strain PHE/MN1-00).